We begin with the raw amino-acid sequence, 484 residues long: tRNA sulfurtransferase (484 aa).

Residues 63 to 167 (EAFGERLACI…NDNLYLIDKR (105 aa)) enclose the THUMP domain. ATP is bound by residues 185–186 (LI), K267, G289, and Q298. A disulfide bridge connects residues C346 and C458. A Rhodanese domain is found at 406–484 (INANEIIIDV…GYTNVKVYRP (79 aa)). C458 (cysteine persulfide intermediate) is an active-site residue.

This sequence belongs to the ThiI family.

The protein localises to the cytoplasm. It carries out the reaction [ThiI sulfur-carrier protein]-S-sulfanyl-L-cysteine + a uridine in tRNA + 2 reduced [2Fe-2S]-[ferredoxin] + ATP + H(+) = [ThiI sulfur-carrier protein]-L-cysteine + a 4-thiouridine in tRNA + 2 oxidized [2Fe-2S]-[ferredoxin] + AMP + diphosphate. It catalyses the reaction [ThiS sulfur-carrier protein]-C-terminal Gly-Gly-AMP + S-sulfanyl-L-cysteinyl-[cysteine desulfurase] + AH2 = [ThiS sulfur-carrier protein]-C-terminal-Gly-aminoethanethioate + L-cysteinyl-[cysteine desulfurase] + A + AMP + 2 H(+). It functions in the pathway cofactor biosynthesis; thiamine diphosphate biosynthesis. Its function is as follows. Catalyzes the ATP-dependent transfer of a sulfur to tRNA to produce 4-thiouridine in position 8 of tRNAs, which functions as a near-UV photosensor. Also catalyzes the transfer of sulfur to the sulfur carrier protein ThiS, forming ThiS-thiocarboxylate. This is a step in the synthesis of thiazole, in the thiamine biosynthesis pathway. The sulfur is donated as persulfide by IscS. This Shewanella halifaxensis (strain HAW-EB4) protein is tRNA sulfurtransferase.